Consider the following 441-residue polypeptide: Protein SPMIP7 (441 aa).

In terms of tissue distribution, testis specific. Expressed at the spermatid stage.

In terms of biological role, essential for normal spermatogenesis. In Mus musculus (Mouse), this protein is Protein SPMIP7 (Spmip7).